A 467-amino-acid chain; its full sequence is Probable lipase C1672.09 (467 aa).

Over 1-17 (MIQLPFIQRLKWEEYMA) the chain is Cytoplasmic. The helical; Signal-anchor for type II membrane protein transmembrane segment at 18 to 38 (LFLGFFFVIFEKLLSCLAFMI) threads the bilayer. The Lumenal segment spans residues 39-467 (HNTLGLFYRS…NHIAPRNKPI (429 aa)). Serine 66 is modified (phosphoserine). The 295-residue stretch at 127-421 (PVVYCHHGLL…SYEHLDMIWA (295 aa)) folds into the AB hydrolase-1 domain. Serine 222 serves as the catalytic Nucleophile. 2 N-linked (GlcNAc...) asparagine glycosylation sites follow: asparagine 311 and asparagine 316. Residues aspartate 389 and histidine 415 each act as charge relay system in the active site. The span at 440–457 (HHPPEHEENDKENREIQK) shows a compositional bias: basic and acidic residues. The disordered stretch occupies residues 440–467 (HHPPEHEENDKENREIQKNHIAPRNKPI).

The protein belongs to the AB hydrolase superfamily. Lipase family.

It is found in the cytoplasm. It localises to the membrane. In terms of biological role, probable lipase. The sequence is that of Probable lipase C1672.09 from Schizosaccharomyces pombe (strain 972 / ATCC 24843) (Fission yeast).